Consider the following 360-residue polypeptide: D-alanine--D-alanine ligase (360 aa).

The ATP-grasp domain maps to 134–343 (KILAQRVGVP…YTELITRLIE (210 aa)). 169–224 (AEKLGRDMFVKPSNQGSSVGVSHVTNADEYAAALKEAFKYDDKVLVEETVPGTEVE) is a binding site for ATP. The Mg(2+) site is built by Asp-297, Glu-310, and Asn-312.

It belongs to the D-alanine--D-alanine ligase family. Requires Mg(2+) as cofactor. It depends on Mn(2+) as a cofactor.

The protein resides in the cytoplasm. The enzyme catalyses 2 D-alanine + ATP = D-alanyl-D-alanine + ADP + phosphate + H(+). It participates in cell wall biogenesis; peptidoglycan biosynthesis. Functionally, cell wall formation. The chain is D-alanine--D-alanine ligase from Lactobacillus helveticus (strain DPC 4571).